We begin with the raw amino-acid sequence, 260 residues long: Hydroxyethylthiazole kinase 1 (260 aa).

Met39 is a substrate binding site. Arg115 and Thr160 together coordinate ATP. Gly187 provides a ligand contact to substrate.

This sequence belongs to the Thz kinase family. Requires Mg(2+) as cofactor.

It carries out the reaction 5-(2-hydroxyethyl)-4-methylthiazole + ATP = 4-methyl-5-(2-phosphooxyethyl)-thiazole + ADP + H(+). The protein operates within cofactor biosynthesis; thiamine diphosphate biosynthesis; 4-methyl-5-(2-phosphoethyl)-thiazole from 5-(2-hydroxyethyl)-4-methylthiazole: step 1/1. In terms of biological role, catalyzes the phosphorylation of the hydroxyl group of 4-methyl-5-beta-hydroxyethylthiazole (THZ). In Streptococcus pneumoniae (strain Taiwan19F-14), this protein is Hydroxyethylthiazole kinase 1.